Reading from the N-terminus, the 241-residue chain is Proteasome subunit alpha (241 aa).

The protein belongs to the peptidase T1A family. The 20S proteasome core is composed of 14 alpha and 14 beta subunits that assemble into four stacked heptameric rings, resulting in a barrel-shaped structure. The two inner rings, each composed of seven catalytic beta subunits, are sandwiched by two outer rings, each composed of seven alpha subunits. The catalytic chamber with the active sites is on the inside of the barrel. Has a gated structure, the ends of the cylinder being occluded by the N-termini of the alpha-subunits. Is capped at one or both ends by the proteasome regulatory ATPase, PAN.

It is found in the cytoplasm. The formation of the proteasomal ATPase PAN-20S proteasome complex, via the docking of the C-termini of PAN into the intersubunit pockets in the alpha-rings, triggers opening of the gate for substrate entry. Interconversion between the open-gate and close-gate conformations leads to a dynamic regulation of the 20S proteasome proteolysis activity. Its function is as follows. Component of the proteasome core, a large protease complex with broad specificity involved in protein degradation. The polypeptide is Proteasome subunit alpha (Saccharolobus solfataricus (strain ATCC 35092 / DSM 1617 / JCM 11322 / P2) (Sulfolobus solfataricus)).